A 228-amino-acid chain; its full sequence is 2-hydroxy-3-keto-5-methylthiopentenyl-1-phosphate phosphatase (228 aa).

It belongs to the HAD-like hydrolase superfamily. MtnX family.

The catalysed reaction is 2-hydroxy-5-methylsulfanyl-3-oxopent-1-enyl phosphate + H2O = 1,2-dihydroxy-5-(methylsulfanyl)pent-1-en-3-one + phosphate. The protein operates within amino-acid biosynthesis; L-methionine biosynthesis via salvage pathway; L-methionine from S-methyl-5-thio-alpha-D-ribose 1-phosphate: step 4/6. Dephosphorylates 2-hydroxy-3-keto-5-methylthiopentenyl-1-phosphate (HK-MTPenyl-1-P) yielding 1,2-dihydroxy-3-keto-5-methylthiopentene (DHK-MTPene). The polypeptide is 2-hydroxy-3-keto-5-methylthiopentenyl-1-phosphate phosphatase (Lysinibacillus sphaericus (strain C3-41)).